We begin with the raw amino-acid sequence, 129 residues long: Large ribosomal subunit protein bL12 (129 aa).

The protein belongs to the bacterial ribosomal protein bL12 family. Homodimer. Part of the ribosomal stalk of the 50S ribosomal subunit. Forms a multimeric L10(L12)X complex, where L10 forms an elongated spine to which 2 to 4 L12 dimers bind in a sequential fashion. Binds GTP-bound translation factors.

In terms of biological role, forms part of the ribosomal stalk which helps the ribosome interact with GTP-bound translation factors. Is thus essential for accurate translation. The polypeptide is Large ribosomal subunit protein bL12 (Photobacterium profundum (strain SS9)).